We begin with the raw amino-acid sequence, 117 residues long: Large ribosomal subunit protein bL20 (117 aa).

Belongs to the bacterial ribosomal protein bL20 family.

Functionally, binds directly to 23S ribosomal RNA and is necessary for the in vitro assembly process of the 50S ribosomal subunit. It is not involved in the protein synthesizing functions of that subunit. In Rickettsia peacockii (strain Rustic), this protein is Large ribosomal subunit protein bL20.